Consider the following 276-residue polypeptide: U6 snRNA phosphodiesterase 1 (276 aa).

Residues 1–58 (MIVNYSSSSSEEESGSSSSPSGKRQKLDTETSEALDHGSAQRKVCKSSHLTPRLPLPE) form a disordered region. His131 serves as the catalytic Proton acceptor. AMP contacts are provided by residues 131-133 (HLS), Tyr213, and 215-221 (DPSFHIS). Residues Tyr213 and 217 to 221 (SFHIS) each bind UMP. The Proton donor role is filled by His219.

This sequence belongs to the 2H phosphoesterase superfamily. USB1 family.

It localises to the nucleus. It catalyses the reaction a 3'-end uridylyl-uridine-RNA = a 3'-end 2',3'-cyclophospho-uridine-RNA + uridine. The catalysed reaction is a 3'-end uridylyl-adenosine-RNA = a 3'-end 2',3'-cyclophospho-uridine-RNA + adenosine. Its function is as follows. 3'-5' RNA exonuclease that trims the 3' end of oligo(U) and oligo(A) tracts of the pre-U6 small nuclear RNA (snRNA) molecule, leading to the formation of a mature U6 snRNA 3' end-terminated with a 2',3'-cyclic phosphate. Participates in the U6 snRNA 3' end processing that prevents U6 snRNA degradation. In addition also removes uridines from the 3' end of U6atac snRNA and possibly the vault RNA VTRNA1-1. The protein is U6 snRNA phosphodiesterase 1 of Danio rerio (Zebrafish).